The following is a 165-amino-acid chain: uncharacterized protein (165 aa).

6 consecutive transmembrane segments (helical) span residues 6 to 26, 28 to 48, 54 to 74, 78 to 98, 110 to 130, and 138 to 158; these read ILFPCLLLAASVYAWLESGQA, LFSGQDQWPVLLMLLGAAFVY, AVTPHFFIGLLLFGIGLHFFA, WVWWPDDFEMLLFMIGFSLLV, AVSMICFSLFLYFFKQIMAWL, and ALLKEYWPFVFIGISLLLLLI.

The protein localises to the cell membrane. This is an uncharacterized protein from Bacillus subtilis (strain 168).